The primary structure comprises 698 residues: D-(-)-3-hydroxybutyrate oligomer hydrolase (698 aa).

The signal sequence occupies residues 1 to 32 (MTTIRGGSRRASLPALALLGVLLGACHSDDNA). Ser-310 (charge relay system) is an active-site residue.

Belongs to the D-(-)-3-hydroxybutyrate oligomer hydrolase family.

The protein resides in the secreted. It catalyses the reaction (3R)-hydroxybutanoate dimer + H2O = 2 (R)-3-hydroxybutanoate + H(+). It functions in the pathway lipid metabolism; butanoate metabolism. Functionally, participates in the degradation of poly-3-hydroxybutyrate (PHB). It works downstream of poly(3-hydroxybutyrate) depolymerase, hydrolyzing D(-)-3-hydroxybutyrate oligomers of various length (3HB-oligomers) into 3HB-monomers. The chain is D-(-)-3-hydroxybutyrate oligomer hydrolase from Burkholderia thailandensis (strain ATCC 700388 / DSM 13276 / CCUG 48851 / CIP 106301 / E264).